The chain runs to 277 residues: MSCDEKAATSSDEPLRIGGLRLTSRLIMGTGGSTSMDTLERALVASGTQLTTVAMRRFAAGPRQSVFEILQRHRITALPNTAGCYTARDAILTANLAREALDTNLVKLEVIADEDTLLPDPVELVNAAEQLVANDFVVLAYTNDDPAIAKRLEDLGCAAVMPAGAPIGTGLGILNPHNIELIVDRANVPVILDAGIGTASEATLAMELGCDAVLLASAVTRAHNPVGMAQAMKMAVVAGRMARTSGRIPRRRLARASSPFDGIITGRVRGPRENDSL.

The active-site Schiff-base intermediate with DXP is K107. 1-deoxy-D-xylulose 5-phosphate is bound by residues G168, 194 to 195, and 216 to 217; these read AG and AS.

It belongs to the ThiG family. In terms of assembly, homotetramer. Forms heterodimers with either ThiH or ThiS.

The protein resides in the cytoplasm. It catalyses the reaction [ThiS sulfur-carrier protein]-C-terminal-Gly-aminoethanethioate + 2-iminoacetate + 1-deoxy-D-xylulose 5-phosphate = [ThiS sulfur-carrier protein]-C-terminal Gly-Gly + 2-[(2R,5Z)-2-carboxy-4-methylthiazol-5(2H)-ylidene]ethyl phosphate + 2 H2O + H(+). The protein operates within cofactor biosynthesis; thiamine diphosphate biosynthesis. Catalyzes the rearrangement of 1-deoxy-D-xylulose 5-phosphate (DXP) to produce the thiazole phosphate moiety of thiamine. Sulfur is provided by the thiocarboxylate moiety of the carrier protein ThiS. In vitro, sulfur can be provided by H(2)S. This is Thiazole synthase from Cutibacterium acnes (strain DSM 16379 / KPA171202) (Propionibacterium acnes).